The chain runs to 246 residues: MAELTPIIVIPARMQATRLPGKPLADIHGEPMIIHVWRRSVQAGLGPVVVACSEAEVFDAVHAHGGQAVMTDPDHPSGSDRVWEAVRKLDPEGRFDAIVNVQGDLPTLDPQIIRAVFAPLAEPGVDVATLVTEITNEEERTNPNVVKAVVGLRPGQRVGRALYFSRATVPANAGPHYHHIGLYAYRRDSLERFVSLPQGVLESREKLEQLRALENGMRIDCALVDTVPLGVDTPADLERARALLKA.

This sequence belongs to the KdsB family.

The protein localises to the cytoplasm. It carries out the reaction 3-deoxy-alpha-D-manno-oct-2-ulosonate + CTP = CMP-3-deoxy-beta-D-manno-octulosonate + diphosphate. The protein operates within nucleotide-sugar biosynthesis; CMP-3-deoxy-D-manno-octulosonate biosynthesis; CMP-3-deoxy-D-manno-octulosonate from 3-deoxy-D-manno-octulosonate and CTP: step 1/1. It functions in the pathway bacterial outer membrane biogenesis; lipopolysaccharide biosynthesis. Activates KDO (a required 8-carbon sugar) for incorporation into bacterial lipopolysaccharide in Gram-negative bacteria. This is 3-deoxy-manno-octulosonate cytidylyltransferase from Paramagnetospirillum magneticum (strain ATCC 700264 / AMB-1) (Magnetospirillum magneticum).